We begin with the raw amino-acid sequence, 195 residues long: Putative inactive carbonic anhydrase 5B-like protein (195 aa).

121–122 (TT) is a binding site for substrate.

This sequence belongs to the alpha-carbonic anhydrase family.

The polypeptide is Putative inactive carbonic anhydrase 5B-like protein (CA5BP1) (Homo sapiens (Human)).